A 295-amino-acid chain; its full sequence is Ethanolamine ammonia-lyase small subunit (295 aa).

Residues V207, E228, and C258 each coordinate adenosylcob(III)alamin.

It belongs to the EutC family. As to quaternary structure, the basic unit is a heterodimer which dimerizes to form tetramers. The heterotetramers trimerize; 6 large subunits form a core ring with 6 small subunits projecting outwards. Requires adenosylcob(III)alamin as cofactor.

It localises to the bacterial microcompartment. The catalysed reaction is ethanolamine = acetaldehyde + NH4(+). The protein operates within amine and polyamine degradation; ethanolamine degradation. In terms of biological role, catalyzes the deamination of various vicinal amino-alcohols to oxo compounds. Allows this organism to utilize ethanolamine as the sole source of nitrogen and carbon in the presence of external vitamin B12. This chain is Ethanolamine ammonia-lyase small subunit, found in Escherichia coli O139:H28 (strain E24377A / ETEC).